Here is a 145-residue protein sequence, read N- to C-terminus: D-aminoacyl-tRNA deacylase (145 aa).

The short motif at 137–138 (GP) is the Gly-cisPro motif, important for rejection of L-amino acids element.

It belongs to the DTD family. As to quaternary structure, homodimer.

The protein localises to the cytoplasm. It catalyses the reaction glycyl-tRNA(Ala) + H2O = tRNA(Ala) + glycine + H(+). It carries out the reaction a D-aminoacyl-tRNA + H2O = a tRNA + a D-alpha-amino acid + H(+). Its function is as follows. An aminoacyl-tRNA editing enzyme that deacylates mischarged D-aminoacyl-tRNAs. Also deacylates mischarged glycyl-tRNA(Ala), protecting cells against glycine mischarging by AlaRS. Acts via tRNA-based rather than protein-based catalysis; rejects L-amino acids rather than detecting D-amino acids in the active site. By recycling D-aminoacyl-tRNA to D-amino acids and free tRNA molecules, this enzyme counteracts the toxicity associated with the formation of D-aminoacyl-tRNA entities in vivo and helps enforce protein L-homochirality. The sequence is that of D-aminoacyl-tRNA deacylase from Limosilactobacillus reuteri (strain DSM 20016) (Lactobacillus reuteri).